We begin with the raw amino-acid sequence, 191 residues long: Calcium-activated potassium channel subunit beta-1 (191 aa).

The Cytoplasmic segment spans residues 2-18 (GKKLVMAQRRGETRALC). Residues 19 to 39 (LGVAMVVGAVITYYILGTTVL) traverse the membrane as a helical segment. Residues 40–157 (PLYQKSVWTQ…YRRLYGPQSL (118 aa)) lie on the Extracellular side of the membrane. N-linked (GlcNAc...) asparagine glycosylation is found at asparagine 80 and asparagine 142. A helical transmembrane segment spans residues 158-178 (LFSLFWPTFLLTGGLLIIVMV). The Cytoplasmic segment spans residues 179–191 (KINQSLSILAAQR).

The protein belongs to the KCNMB (TC 8.A.14.1) family. KCNMB1 subfamily. As to quaternary structure, interacts with KCNMA1 tetramer. There are probably 4 molecules of KCMNB1 per KCNMA1 tetramer. N-glycosylated.

The protein localises to the membrane. Its function is as follows. Regulatory subunit of the calcium activated potassium KCNMA1 (maxiK) channel. Modulates the calcium sensitivity and gating kinetics of KCNMA1, thereby contributing to KCNMA1 channel diversity. Increases the apparent Ca(2+)/voltage sensitivity of the KCNMA1 channel. It also modifies KCNMA1 channel kinetics and alters its pharmacological properties. It slows down the activation and the deactivation kinetics of the channel. Acts as a negative regulator of smooth muscle contraction by enhancing the calcium sensitivity to KCNMA1. Its presence is also a requirement for internal binding of the KCNMA1 channel opener dehydrosoyasaponin I (DHS-1) triterpene glycoside and for external binding of the agonist hormone 17-beta-estradiol (E2). Increases the binding activity of charybdotoxin (CTX) toxin to KCNMA1 peptide blocker by increasing the CTX association rate and decreasing the dissociation rate. The sequence is that of Calcium-activated potassium channel subunit beta-1 (KCNMB1) from Bos taurus (Bovine).